The chain runs to 591 residues: L-fucose isomerase (591 aa).

Active-site proton acceptor residues include glutamate 337 and aspartate 361. Positions 337, 361, and 528 each coordinate Mn(2+).

The protein belongs to the L-fucose isomerase family. As to quaternary structure, homohexamer. It depends on Mn(2+) as a cofactor.

The protein resides in the cytoplasm. The catalysed reaction is L-fucose = L-fuculose. It participates in carbohydrate degradation; L-fucose degradation; L-lactaldehyde and glycerone phosphate from L-fucose: step 1/3. Converts the aldose L-fucose into the corresponding ketose L-fuculose. The polypeptide is L-fucose isomerase (Salmonella schwarzengrund (strain CVM19633)).